A 202-amino-acid chain; its full sequence is Probable molybdenum cofactor guanylyltransferase (202 aa).

Residues 9–11, lysine 22, asparagine 50, aspartate 77, and aspartate 102 contribute to the GTP site; that span reads VAG. Aspartate 102 lines the Mg(2+) pocket.

It belongs to the MobA family. The cofactor is Mg(2+).

Its subcellular location is the cytoplasm. The catalysed reaction is Mo-molybdopterin + GTP + H(+) = Mo-molybdopterin guanine dinucleotide + diphosphate. In terms of biological role, transfers a GMP moiety from GTP to Mo-molybdopterin (Mo-MPT) cofactor (Moco or molybdenum cofactor) to form Mo-molybdopterin guanine dinucleotide (Mo-MGD) cofactor. This Natronomonas pharaonis (strain ATCC 35678 / DSM 2160 / CIP 103997 / JCM 8858 / NBRC 14720 / NCIMB 2260 / Gabara) (Halobacterium pharaonis) protein is Probable molybdenum cofactor guanylyltransferase.